Consider the following 615-residue polypeptide: Neurosecretory protein VGF (615 aa).

Residues 1 to 22 (MKALRLSASALFCLLLINGLGA) form the signal peptide. 2 disordered regions span residues 22–201 (AAPP…ESPG) and 218–257 (PERA…PKTH). Composition is skewed to pro residues over residues 25-35 (PGRPEAQPPPL) and 129-141 (PESP…PRPQ). Residues 179–194 (ETAAAETETRTHTLTR) show a composition bias toward low complexity. The residue at position 310 (Gln-310) is a Pyrrolidone carboxylic acid. Residues 342-600 (RQRGLGGRGL…EAEERRLQEQ (259 aa)) are disordered. The span at 378 to 394 (VGEEDEEAAEAEAEAEE) shows a compositional bias: acidic residues. Positions 415-433 (AEDKRSQEETPGHRRKEAE) are enriched in basic and acidic residues. At Ser-420 the chain carries Phosphoserine; by FAM20C. Thr-424 is modified (phosphothreonine; by FAM20C). Residues 434 to 448 (GTEEGGEEEDDEEMD) show a composition bias toward acidic residues. The span at 487–497 (PPEPVPPPRAA) shows a compositional bias: pro residues. At Pro-577 the chain carries Proline amide. The segment covering 577–599 (PGREAQARRAQEEAEAEERRLQE) has biased composition (basic and acidic residues).

As to quaternary structure, interacts with HSPA8 on cell membrane. Interacts with C3AR1. Interacts with C1QBP. Multiple peptides are derived from VGF, with activities in synaptic plasticity, antidepression, penile erection, autonomic activation, and increases in energy expenditure. In terms of tissue distribution, central and peripheral nervous systems, synthesized exclusively in neuronal and neuroendocrine cells.

The protein resides in the secreted. It is found in the cytoplasmic vesicle. The protein localises to the secretory vesicle. Its function is as follows. Secreted polyprotein that is packaged and proteolytically processed by prohormone convertases PCSK1 and PCSK2 in a cell-type-specific manner. VGF and peptides derived from its processing play many roles in neurogenesis and neuroplasticity associated with learning, memory, depression and chronic pain. Functionally, plays a role in the control of body fluid homeostasis by regulating vasopressin release. Suppresses presynaptic glutamatergic neurons connected to vasopressin neurons. Plays a role in the control of body fluid homeostasis by regulating vasopressin release. Activates GABAergic interneurons which are inhibitory neurons of the nervous system and thereby suppresses presynaptic glutamatergic neurons. Also stimulates feeding behavior in an orexin-dependent manner in the hypothalamus. Functions as a positive regulator for the activation of orexin neurons resulting in elevated gastric acid secretion and gastric emptying. In terms of biological role, secreted multifunctional neuropeptide that binds to different cell receptors and thereby plays multiple physiological roles including modulation of energy expenditure, pain, response to stress, gastric regulation, glucose homeostasis as well as lipolysis. Activates the G-protein-coupled receptor C3AR1 via a folding-upon-binding mechanism leading to enhanced lipolysis in adipocytes. Interacts with C1QBP receptor in macrophages and microglia causing increased levels of intracellular calcium and hypersensitivity. Its function is as follows. Plays a role in the regulation of memory formation and depression-related behaviors potentially by influencing synaptic plasticity and neurogenesis. Induces acute and transient activation of the NTRK2/TRKB receptor and subsequent CREB phosphorylation. Also induces insulin secretion in insulinoma cells by increasing intracellular calcium mobilization. Functionally, has bactericidal activity against M.luteus, and antifungal activity against P. Pastoris. This is Neurosecretory protein VGF (VGF) from Homo sapiens (Human).